Here is a 490-residue protein sequence, read N- to C-terminus: Glutamyl-tRNA(Gln) amidotransferase subunit A (490 aa).

Catalysis depends on charge relay system residues lysine 76 and serine 151. The active-site Acyl-ester intermediate is serine 175.

Belongs to the amidase family. GatA subfamily. In terms of assembly, heterotrimer of A, B and C subunits.

The catalysed reaction is L-glutamyl-tRNA(Gln) + L-glutamine + ATP + H2O = L-glutaminyl-tRNA(Gln) + L-glutamate + ADP + phosphate + H(+). In terms of biological role, allows the formation of correctly charged Gln-tRNA(Gln) through the transamidation of misacylated Glu-tRNA(Gln) in organisms which lack glutaminyl-tRNA synthetase. The reaction takes place in the presence of glutamine and ATP through an activated gamma-phospho-Glu-tRNA(Gln). This is Glutamyl-tRNA(Gln) amidotransferase subunit A from Aromatoleum aromaticum (strain DSM 19018 / LMG 30748 / EbN1) (Azoarcus sp. (strain EbN1)).